The sequence spans 1135 residues: Putative beta-hexosaminidase (1135 aa).

An N-terminal signal peptide occupies residues 1 to 23; that stretch reads MKWVKSGVGILGILLTICHAVTS. 2 disordered regions span residues 970–1082 and 1107–1135; these read AHPP…LPGQ and QMRG…QQAG. Over residues 986–1003 the composition is skewed to pro residues; that stretch reads NMPPPFPPRPPFGPPMLP. 2 stretches are compositionally biased toward low complexity: residues 1004 to 1026 and 1043 to 1073; these read PGQM…TALG and TGQA…LPGQ.

Belongs to the glycosyl hydrolase 20 family. As to expression, prismatic layer of shell (at protein level). Expressed primarily in the mantle with highest level in the mantle edge and lower level in the mantle pallium.

It localises to the secreted. It carries out the reaction Hydrolysis of terminal non-reducing N-acetyl-D-hexosamine residues in N-acetyl-beta-D-hexosaminides.. Its pathway is glycan degradation; chitin degradation. This chain is Putative beta-hexosaminidase, found in Margaritifera margaritifera (Freshwater pearl mussel).